We begin with the raw amino-acid sequence, 166 residues long: uncharacterized protein (166 aa).

3 stretches are compositionally biased toward basic and acidic residues: residues 1-13, 21-112, and 119-137; these read MAEV…EHNS, KAND…KTKE, and DNVE…KEGG. The interval 1 to 144 is disordered; that stretch reads MAEVSKKRCE…EGGSKAWNKT (144 aa). Tandem repeats lie at residues 31–41, 42–52, 53–63, 64–74, 75–85, 86–96, 97–107, and 108–118. The 8 X 11 AA approximate tandem repeats of D-K-T-K-E-T-A-G/E-S-A-K stretch occupies residues 31–118; sequence DKTKETAGSA…KTKETAGNVR (88 aa).

This sequence belongs to the LEA type 1 family.

This is an uncharacterized protein from Encephalitozoon cuniculi (strain GB-M1) (Microsporidian parasite).